We begin with the raw amino-acid sequence, 100 residues long: MDARDIILRPVITEKSTNLMDDKKYTFDVLLTATKTQVRNAVEEIFDVKVKSVNIMNVRGKDKRVGRYTGKTARRRKAIVALTDDSNDIKIFQENTEDNK.

The protein belongs to the universal ribosomal protein uL23 family. In terms of assembly, part of the 50S ribosomal subunit. Contacts protein L29, and trigger factor when it is bound to the ribosome.

Its function is as follows. One of the early assembly proteins it binds 23S rRNA. One of the proteins that surrounds the polypeptide exit tunnel on the outside of the ribosome. Forms the main docking site for trigger factor binding to the ribosome. The sequence is that of Large ribosomal subunit protein uL23 from Lactobacillus acidophilus (strain ATCC 700396 / NCK56 / N2 / NCFM).